The primary structure comprises 291 residues: Nucleoid occlusion protein (291 aa).

Residues 155–174 constitute a DNA-binding region (H-T-H motif); the sequence is EALAQRLGKGQSTVANKLRL.

This sequence belongs to the ParB family.

It is found in the cytoplasm. Its subcellular location is the nucleoid. Functionally, effects nucleoid occlusion by binding relatively nonspecifically to DNA and preventing the assembly of the division machinery in the vicinity of the nucleoid, especially under conditions that disturb the cell cycle. It helps to coordinate cell division and chromosome segregation by preventing the formation of the Z ring through the nucleoid, which would cause chromosome breakage. This chain is Nucleoid occlusion protein, found in Bacillus pumilus (strain SAFR-032).